Here is a 154-residue protein sequence, read N- to C-terminus: uncharacterized protein (154 aa).

The next 2 helical transmembrane spans lie at 54-74 (FLIT…IYLL) and 81-101 (FAFV…FFLS).

The protein resides in the cell membrane. This is an uncharacterized protein from Mycoplasma genitalium (strain ATCC 33530 / DSM 19775 / NCTC 10195 / G37) (Mycoplasmoides genitalium).